We begin with the raw amino-acid sequence, 244 residues long: UDP-2,3-diacylglucosamine hydrolase (244 aa).

Mn(2+) contacts are provided by Asp-8, His-10, Asp-41, Asn-79, and His-114. 79-80 (NR) lines the substrate pocket. The substrate site is built by Asp-122, Ser-160, Asn-164, Lys-167, and His-195. Mn(2+) contacts are provided by His-195 and His-197.

This sequence belongs to the LpxH family. The cofactor is Mn(2+).

The protein resides in the cell inner membrane. It carries out the reaction UDP-2-N,3-O-bis[(3R)-3-hydroxytetradecanoyl]-alpha-D-glucosamine + H2O = 2-N,3-O-bis[(3R)-3-hydroxytetradecanoyl]-alpha-D-glucosaminyl 1-phosphate + UMP + 2 H(+). Its pathway is glycolipid biosynthesis; lipid IV(A) biosynthesis; lipid IV(A) from (3R)-3-hydroxytetradecanoyl-[acyl-carrier-protein] and UDP-N-acetyl-alpha-D-glucosamine: step 4/6. Hydrolyzes the pyrophosphate bond of UDP-2,3-diacylglucosamine to yield 2,3-diacylglucosamine 1-phosphate (lipid X) and UMP by catalyzing the attack of water at the alpha-P atom. Involved in the biosynthesis of lipid A, a phosphorylated glycolipid that anchors the lipopolysaccharide to the outer membrane of the cell. The sequence is that of UDP-2,3-diacylglucosamine hydrolase from Marinobacter nauticus (strain ATCC 700491 / DSM 11845 / VT8) (Marinobacter aquaeolei).